Reading from the N-terminus, the 366-residue chain is MDSDDEMVEEAVEGHLDDDGLPHGFCTVTYSSTDRFEGNFVHGEKNGRGKFFFFDGSTLEGYYVDDALQGQGVYTYEDGGVLQGTYVDGELNGPAQEYDTDGRLIFKGQYKDNIRHGVCWIYYPDGGSLVGEVNEDGEMTGEKIAYVYPDERTALYGKFIDGEMIEGKLATLMSTEEGRPHFELMPGNSVYHFDKSTSSCISTNALLPDPYESERVYVAESLISSAGEGLFSKVAVGPNTVMSFYNGVRITHQEVDSRDWALNGNTLSLDEETVIDVPEPYNHVSKYCASLGHKANHSFTPNCIYDMFVHPRFGPIKCIRTLRAVEADEELTVAYGYDHSPPGKSGPEAPEWYQVELKAFQATQQK.

MORN repeat units follow at residues 36-58 (FEGN…DGST), 59-81 (LEGY…DGGV), and 106-128 (FKGQ…DGGS). The region spanning 214-336 (ERVYVAESLI…ADEELTVAYG (123 aa)) is the SET domain. S-adenosyl-L-methionine is bound by residues 226 to 228 (AGE), N296, H297, and E356.

Belongs to the class V-like SAM-binding methyltransferase superfamily. Histone-lysine methyltransferase family. SET7 subfamily. As to quaternary structure, interacts with IPF1/PDX-1. Widely expressed. Expressed in pancreatic islets.

It is found in the nucleus. The protein localises to the chromosome. The catalysed reaction is L-lysyl(4)-[histone H3] + S-adenosyl-L-methionine = N(6)-methyl-L-lysyl(4)-[histone H3] + S-adenosyl-L-homocysteine + H(+). The enzyme catalyses L-lysyl-[protein] + S-adenosyl-L-methionine = N(6)-methyl-L-lysyl-[protein] + S-adenosyl-L-homocysteine + H(+). In terms of biological role, histone methyltransferase that specifically monomethylates 'Lys-4' of histone H3. H3 'Lys-4' methylation represents a specific tag for epigenetic transcriptional activation. Plays a central role in the transcriptional activation of genes such as collagenase or insulin. Recruited by IPF1/PDX-1 to the insulin promoter, leading to activate transcription. Also has methyltransferase activity toward non-histone proteins such as CGAS, p53/TP53, TAF10, and possibly TAF7 by recognizing and binding the [KR]-[STA]-K in substrate proteins. Monomethylates 'Lys-189' of TAF10, leading to increase the affinity of TAF10 for RNA polymerase II. Monomethylates 'Lys-372' of p53/TP53, stabilizing p53/TP53 and increasing p53/TP53-mediated transcriptional activation. Monomethylates 'Lys-491' of CGAS, promoting interaction between SGF29 and CGAS. This chain is Histone-lysine N-methyltransferase SETD7 (SETD7), found in Homo sapiens (Human).